The sequence spans 1024 residues: RNA cytidine acetyltransferase (1024 aa).

287-296 (GRGKSAALGL) contacts ATP. N6-acetyllysine is present on K426. Position 470 (R470) interacts with ATP. One can recognise an N-acetyltransferase domain in the interval 558 to 753 (CLLPPVPPTQ…HSCIMLKTLA (196 aa)). Residues 629-631 (IAV) and 636-642 (QGMGYGS) contribute to the acetyl-CoA site. Residues 702-1024 (PAERLDYLGV…RKDMKLKRKK (323 aa)) form a required for localization to the nucleolus and midbody region. The residue at position 716 (T716) is a Phosphothreonine. Residue R725 participates in acetyl-CoA binding. Phosphoserine occurs at positions 934, 984, and 987. Residues 990-1024 (SDKKRKLETKQEPKQSKKLKKRDNNRKDMKLKRKK) form a disordered region. Residues 1005 to 1024 (SKKLKKRDNNRKDMKLKRKK) are compositionally biased toward basic residues.

It belongs to the RNA cytidine acetyltransferase family. NAT10 subfamily. As to quaternary structure, part of the small subunit (SSU) processome, composed of more than 70 proteins and the RNA chaperone small nucleolar RNA (snoRNA) U3. Interacts with THUMPD1. Interacts with SUN1 (via N-terminus). Interacts with TERT.

The protein resides in the nucleus. It is found in the nucleolus. It catalyses the reaction a cytidine in 18S rRNA + acetyl-CoA + ATP + H2O = an N(4)-acetylcytidine in 18S rRNA + ADP + phosphate + CoA + H(+). It carries out the reaction a cytidine in tRNA + acetyl-CoA + ATP + H2O = an N(4)-acetylcytidine in tRNA + ADP + phosphate + CoA + H(+). The catalysed reaction is a cytidine in mRNA + acetyl-CoA + ATP + H2O = an N(4)-acetylcytidine in mRNA + ADP + phosphate + CoA + H(+). In terms of biological role, RNA cytidine acetyltransferase that catalyzes the formation of N(4)-acetylcytidine (ac4C) modification on mRNAs, 18S rRNA and tRNAs. Catalyzes ac4C modification of a broad range of mRNAs, enhancing mRNA stability and translation. mRNA ac4C modification is frequently present within wobble cytidine sites and promotes translation efficiency. Mediates the formation of ac4C at position 1842 in 18S rRNA. May also catalyze the formation of ac4C at position 1337 in 18S rRNA. Required for early nucleolar cleavages of precursor rRNA at sites A0, A1 and A2 during 18S rRNA synthesis. Catalyzes the formation of ac4C in serine and leucine tRNAs. Requires the tRNA-binding adapter protein THUMPD1 for full tRNA acetyltransferase activity but not for 18S rRNA acetylation. In addition to RNA acetyltransferase activity, also able to acetylate lysine residues of proteins, such as histones, microtubules, p53/TP53 and MDM2, in vitro. The relevance of the protein lysine acetyltransferase activity is however unsure in vivo. Activates telomerase activity by stimulating the transcription of TERT, and may also regulate telomerase function by affecting the balance of telomerase subunit assembly, disassembly, and localization. Involved in the regulation of centrosome duplication by acetylating CENATAC during mitosis, promoting SASS6 proteasome degradation. Part of the small subunit (SSU) processome, first precursor of the small eukaryotic ribosomal subunit. During the assembly of the SSU processome in the nucleolus, many ribosome biogenesis factors, an RNA chaperone and ribosomal proteins associate with the nascent pre-rRNA and work in concert to generate RNA folding, modifications, rearrangements and cleavage as well as targeted degradation of pre-ribosomal RNA by the RNA exosome. The sequence is that of RNA cytidine acetyltransferase from Mus musculus (Mouse).